The chain runs to 1262 residues: Unconventional myosin-VI (1262 aa).

A Myosin N-terminal SH3-like domain is found at 2-53; the sequence is EDGKPVWAPHPTDGFQMGNIVDIGPDSLTIEPLNQKGKTFLALINQVFPAEE. A Myosin motor domain is found at 57–771; the sequence is KDVEDNCSLM…KFAEFDQIMK (715 aa). Position 151-158 (151-158) interacts with ATP; sequence GESGAGKT. Ser-267 bears the Phosphoserine mark. Residues 273–317 form a responsible for slow ATPase activity region; sequence YLNRGCTRFFANKETDKQILQNRKSPEYVKAGSLKDPLLDDHGDF. The residue at position 405 (Thr-405) is a Phosphothreonine. Residue Ser-604 is modified to Phosphoserine. Actin-binding regions lie at residues 651 to 673 and 665 to 672; these read LNLL…KPNL and FIRCIKPN. A required for binding calmodulin region spans residues 782–810; sequence KRVNLWLVCSRWKKVQWCSLSVIKLKNKI. One can recognise an IQ domain in the interval 814 to 834; sequence AEACIKMQKTIRMWLCKRRHK. The three-helix bundle stretch occupies residues 835-916; that stretch reads PRIDGLVKVG…EDLLSALQKK (82 aa). Positions 864–984 form a coiled coil; it reads KPEVNRQIKN…EDDEKRIQAE (121 aa). An SAH region spans residues 917–984; it reads KQQEEEAERL…EDDEKRIQAE (68 aa). Residues 933–955 form a disordered region; that stretch reads MEKERKRREEDEERRRKEEEERR. The residue at position 1025 (Ser-1025) is a Phosphoserine. The interval 1034 to 1253 is interaction with TAX1BP1 and CALCOCO2/NDP52; sequence LRRGPAVQAT…ESRQARPTYA (220 aa). An interaction with OPTN region spans residues 1084–1086; that stretch reads RRL. Position 1123 is a phosphoserine (Ser-1123). An interaction with TOM1 region spans residues 1125–1253; the sequence is QQNPAAQLPA…ESRQARPTYA (129 aa).

The protein belongs to the TRAFAC class myosin-kinesin ATPase superfamily. Myosin family. As to quaternary structure, homodimer; dimerization seems to implicate the unfolding of the three-helix bundle region creating an additional calmodulin binding site, and cargo binding. Able to function as a monomer under specific conditions in vitro. Forms a complex with CFTR and DAB2 in the apical membrane of epithelial cells. Component of the DISP/DOCK7-induced septin displacement complex, at least composed of DOCK7, LRCH3 and MYO6. Binding to calmodulin through a unique insert, not found in other myosins, located in the neck region between the motor domain and the IQ domain appears to contribute to the directionality reversal. This interaction occurs only if the C-terminal lobe of calmodulin is occupied by calcium. Interaction with F-actin/ACTN1 occurs only at the apical brush border domain of the proximal tubule cells. Interacts with DAB2. In vitro, the C-terminal globular tail binds a C-terminal region of DAB2. Interacts with CFTR. Interacts with CABP5. Interacts (via residues 1128-1256) with TOM1 (via residues 392-463). Interacts (via residues 1060-1285) with OPTN. Interacts (via residues 1060-1285) with TAX1BP1 and CALCOCO2/NDP52. Interacts with TOM1L2. Interacts with CLIC5; may work together in a complex which also includes RDX and MYO6 to stabilize linkages between the plasma membrane and subjacent actin cytoskeleton at the base of stereocilia. Post-translationally, phosphorylation in the motor domain, induced by EGF, results in translocation of MYO6 from the cell surface to membrane ruffles and affects F-actin dynamics. Phosphorylated in vitro by p21-activated kinase (PAK). In terms of tissue distribution, within the cochlea, expressed specifically within the sensory hair cells (at protein level). Expressed in the inner and outer plexiform layer of the retina (at protein level). Widely expressed. Expressed in the brain, kidney, liver, and testis.

Its subcellular location is the golgi apparatus. The protein localises to the trans-Golgi network membrane. It localises to the nucleus. It is found in the cytoplasm. The protein resides in the perinuclear region. Its subcellular location is the membrane. The protein localises to the clathrin-coated pit. It localises to the cytoplasmic vesicle. It is found in the clathrin-coated vesicle. The protein resides in the cell projection. Its subcellular location is the filopodium. The protein localises to the ruffle membrane. It localises to the microvillus. It is found in the cytosol. Myosins are actin-based motor molecules with ATPase activity. Unconventional myosins serve in intracellular movements. Myosin 6 is a reverse-direction motor protein that moves towards the minus-end of actin filaments. Has slow rate of actin-activated ADP release due to weak ATP binding. Functions in a variety of intracellular processes such as vesicular membrane trafficking and cell migration. Required for the structural integrity of the Golgi apparatus via the p53-dependent pro-survival pathway. Appears to be involved in a very early step of clathrin-mediated endocytosis in polarized epithelial cells. Together with TOM1, mediates delivery of endocytic cargo to autophagosomes thereby promoting autophagosome maturation and driving fusion with lysosomes. Links TOM1 with autophagy receptors, such as TAX1BP1; CALCOCO2/NDP52 and OPTN. May act as a regulator of F-actin dynamics. As part of the DISP complex, may regulate the association of septins with actin and thereby regulate the actin cytoskeleton. May play a role in transporting DAB2 from the plasma membrane to specific cellular targets. May play a role in the extension and network organization of neurites. Required for structural integrity of inner ear hair cells. Required for the correct localization of CLIC5 and RDX at the stereocilium base. Modulates RNA polymerase II-dependent transcription. In Mus musculus (Mouse), this protein is Unconventional myosin-VI (Myo6).